A 336-amino-acid polypeptide reads, in one-letter code: Potassium channel subfamily K member 1 (336 aa).

The Cytoplasmic portion of the chain corresponds to 1–20 (MLQSLAGSSCVRLVERHRSA). Residues 21–41 (WCFGFLVLGYLLYLVFGAVVF) form a helical membrane-spanning segment. Over 42–103 (SSVELPYEDL…SNASGNWNWD (62 aa)) the chain is Extracellular. Residue Asn95 is glycosylated (N-linked (GlcNAc...) asparagine). An intramembrane region (helical) is located at residues 104–116 (FTSALFFASTVLS). The stretch at 117-122 (TTGYGH) is an intramembrane region. A selectivity filter 1 region spans residues 117–122 (TTGYGH). At 123-132 (TVPLSDGGKA) the chain is on the extracellular side. A helical transmembrane segment spans residues 133-156 (FCIIYSVIGIPFTLLFLTAVVQRV). Topologically, residues 157 to 181 (TVHVTRRPVLYFHIRWGFSKQVVAI) are cytoplasmic. Residues 182 to 202 (VHAVLLGFVTVSCFFFIPAAV) form a helical membrane-spanning segment. At 203–211 (FSVLEDDWN) the chain is on the extracellular side. The segment at residues 212-224 (FLESFYFCFISLS) is an intramembrane region (helical). The segment at 225-230 (TIGLGD) is selectivity filter 2. Residues 225–231 (TIGLGDY) lie within the membrane without spanning it. Residues 232–243 (VPGEGYNQKFRE) lie on the Extracellular side of the membrane. Residues 244–267 (LYKIGITCYLLLGLIAMLVVLETF) traverse the membrane as a helical segment. Residues 268-336 (CELHELKKFR…PPYEDGSADH (69 aa)) lie on the Cytoplasmic side of the membrane. Lys274 is covalently cross-linked (Glycyl lysine isopeptide (Lys-Gly) (interchain with G-Cter in SUMO)). The important for intracellular retention in recycling endosomes stretch occupies residues 293–299 (IMEHDQL). Positions 310–336 (GLKEEQKQSEPFVASQSPPYEDGSADH) are disordered. Ser326 carries the post-translational modification Phosphoserine.

This sequence belongs to the two pore domain potassium channel (TC 1.A.1.8) family. Homodimer; disulfide-linked. Heterodimer with KCNK2; disulfide-linked. In astrocytes, forms mostly heterodimeric potassium channels with KCNK2, with only a minor proportion of functional channels containing homodimeric KCNK1. Interacts with KCNK3 and KCNK9, forming functional heterodimeric channels. Interacts with GNG4. Identified in a complex with PSD and ARF6; interacts only with PSD that is bound to ARF6. Interacts with UBE2I. Sumoylation is controversial. Sumoylated by UBE2I. Not sumoylated when expressed in xenopus oocytes or mammalian cells. Sumoylation inactivates the channel, but does not interfere with expression at the cell membrane. Sumoylation of a single subunit is sufficient to silence the dimeric channel. Sumoylation of KCNK1 is sufficient to silence heterodimeric channels formed by KCNK1 and KCNK3 or KCNK9. Desumoylated by SENP1; this activates the channel. Desumoylated by SENP1; this strongly increases halothane-mediated activation of heterodimeric channels formed with KCNK9. SENP1 treatment has no effect. Detected in spiral ganglion neurons. Detected in hippocampus CA1 and CA1 regions and in the molecular layer of the dentate gyrus. Detected on hippocampus astrocytes. Highly expressed in the stria vascularis in the cochlea. Detected in pancreas islet beta cells. Detected in kidney, at brush border membranes in proximal tubules and in cytoplasmic structures in distal convoluted tubules, thick ascending limbs and collecting ducts (at protein level). Widely expressed. Detected in spiral ganglion cells. Highest expression in brain, kidney, thyroid, salivary gland, adrenal gland, prostate, epididymis, uterus, placenta, colon and jejunum. Moderate expression in eyes, pituitary, pancreas, smooth muscle, testis and ovary. Very low levels in lung, aorta, liver, heart, skeletal muscle, thymus and spleen. In the brain, highest expression in cerebellar granule cells, brainstem, hippocampus and cerebral cortex.

Its subcellular location is the cell membrane. The protein localises to the recycling endosome. It localises to the apical cell membrane. The protein resides in the cytoplasmic vesicle. It is found in the perikaryon. Its subcellular location is the cell projection. The protein localises to the dendrite. It localises to the synaptic cell membrane. The catalysed reaction is K(+)(in) = K(+)(out). It carries out the reaction NH4(+)(in) = NH4(+)(out). The enzyme catalyses Na(+)(in) = Na(+)(out). It catalyses the reaction Rb(+)(in) = Rb(+)(out). The catalysed reaction is Cs(+)(in) = Cs(+)(out). It carries out the reaction Li(+)(in) = Li(+)(out). The enzyme catalyses L-glutamate(out) = L-glutamate(in). It catalyses the reaction chloride(in) = chloride(out). Inhibited by quinine, quinidine, barium, and internal acidification. Functionally, ion channel that contributes to passive transmembrane potassium transport and to the regulation of the resting membrane potential in brain astrocytes, but also in kidney and in other tissues. Forms dimeric channels through which potassium ions pass in accordance with their electrochemical gradient. The channel is selective for K(+) ions at physiological potassium concentrations and at neutral pH, but becomes permeable to Na(+) at subphysiological K(+) levels and upon acidification of the extracellular medium. The homodimer has very low potassium channel activity, when expressed in heterologous systems, and can function as weakly inward rectifying potassium channel. Channel activity is modulated by activation of serotonin receptors. Heterodimeric channels containing KCNK1 and KCNK2 have much higher activity, and may represent the predominant form in astrocytes. Heterodimeric channels containing KCNK1 and KCNK3 or KCNK9 have much higher activity. Heterodimeric channels formed by KCNK1 and KCNK9 may contribute to halothane-sensitive currents. Mediates outward rectifying potassium currents in dentate gyrus granule cells and contributes to the regulation of their resting membrane potential. Contributes to the regulation of action potential firing in dentate gyrus granule cells and down-regulates their intrinsic excitability. In astrocytes, the heterodimer formed by KCNK1 and KCNK2 is required for rapid glutamate release in response to activation of G-protein coupled receptors, such as F2R and CNR1. Required for normal ion and water transport in the kidney. Contributes to the regulation of the resting membrane potential of pancreatic beta cells. The low channel activity of homodimeric KCNK1 may be due to sumoylation. The low channel activity may be due to rapid internalization from the cell membrane and retention in recycling endosomes. Permeable to monovalent cations with ion selectivity for K(+) &gt; Rb(+) &gt;&gt; NH4(+) &gt;&gt; Cs(+) = Na(+) = Li(+). This Mus musculus (Mouse) protein is Potassium channel subfamily K member 1 (Kcnk1).